A 260-amino-acid polypeptide reads, in one-letter code: Small ribosomal subunit protein uS2 (260 aa).

The protein belongs to the universal ribosomal protein uS2 family.

In Borreliella burgdorferi (strain ATCC 35210 / DSM 4680 / CIP 102532 / B31) (Borrelia burgdorferi), this protein is Small ribosomal subunit protein uS2 (rpsB).